We begin with the raw amino-acid sequence, 303 residues long: Acetylxylan esterase A (303 aa).

A signal peptide spans 1–23; it reads MLSTHLLFLATTLLTSLFHPIAA. Residue serine 147 is the Charge relay system of the active site. Residue asparagine 189 is glycosylated (N-linked (GlcNAc...) asparagine).

Belongs to the carbohydrate esterase 1 (CE1) family. AxeA subfamily. In terms of assembly, monomer. Post-translationally, glycosylated.

The protein resides in the secreted. It catalyses the reaction Deacetylation of xylans and xylo-oligosaccharides.. The protein operates within glycan degradation; xylan degradation. In terms of biological role, acetylxylan esterase involved in the hydrolysis of xylan, a major structural heterogeneous polysaccharide found in plant biomass representing the second most abundant polysaccharide in the biosphere, after cellulose. Degrades acetylated xylans by cleaving acetyl side groups from the hetero-xylan backbone. The chain is Acetylxylan esterase A (axeA) from Aspergillus ficuum.